The chain runs to 205 residues: NADH-quinone oxidoreductase subunit C (205 aa).

This sequence belongs to the complex I 30 kDa subunit family. As to quaternary structure, NDH-1 is composed of 14 different subunits. Subunits NuoB, C, D, E, F, and G constitute the peripheral sector of the complex.

The protein localises to the cell inner membrane. It carries out the reaction a quinone + NADH + 5 H(+)(in) = a quinol + NAD(+) + 4 H(+)(out). NDH-1 shuttles electrons from NADH, via FMN and iron-sulfur (Fe-S) centers, to quinones in the respiratory chain. The immediate electron acceptor for the enzyme in this species is believed to be ubiquinone. Couples the redox reaction to proton translocation (for every two electrons transferred, four hydrogen ions are translocated across the cytoplasmic membrane), and thus conserves the redox energy in a proton gradient. This is NADH-quinone oxidoreductase subunit C from Nitrosospira multiformis (strain ATCC 25196 / NCIMB 11849 / C 71).